The chain runs to 248 residues: Secreted and transmembrane protein 1 (248 aa).

An N-terminal signal peptide occupies residues 1–28; the sequence is MQTCPLAFPGHVSQALGTLLFLAASLSA. Over 29-145 the chain is Extracellular; the sequence is QNEGWDSPIC…AEPQSAPDTG (117 aa). Residues C38 and C55 are joined by a disulfide bond. N56 carries an N-linked (GlcNAc...) asparagine glycan. The helical transmembrane segment at 146-166 threads the bilayer; that stretch reads FWPVPAVVTAVFILLVALVMF. Over 167 to 248 the chain is Cytoplasmic; it reads AWYRCRCSQQ…QPLFPYAADP (82 aa).

It belongs to the SECTM family. As to quaternary structure, interacts with CD7. As to expression, detected at the highest levels in peripheral blood leukocytes and breast cancer cell lines. Found in leukocytes of the myeloid lineage, with the strongest expression observed in granulocytes and no detectable expression in lymphocytes. Expressed in thymic epithelial cells and fibroblasts.

It localises to the cell membrane. Its subcellular location is the secreted. In terms of biological role, may be involved in thymocyte signaling. The protein is Secreted and transmembrane protein 1 (SECTM1) of Homo sapiens (Human).